A 103-amino-acid polypeptide reads, in one-letter code: Small ribosomal subunit protein bS6c (103 aa).

The protein belongs to the bacterial ribosomal protein bS6 family.

The protein localises to the plastid. Its subcellular location is the chloroplast. Functionally, binds together with bS18 to 16S ribosomal RNA. The sequence is that of Small ribosomal subunit protein bS6c from Gracilaria tenuistipitata var. liui (Red alga).